Consider the following 277-residue polypeptide: Large ribosomal subunit protein uL2 (277 aa).

The segment at 223–264 is disordered; that stretch reads VAMNPVDHPHGGGEGKTAAGRHPVSPWGTPSKGSRTRRNKRT.

This sequence belongs to the universal ribosomal protein uL2 family. In terms of assembly, part of the 50S ribosomal subunit. Forms a bridge to the 30S subunit in the 70S ribosome.

Functionally, one of the primary rRNA binding proteins. Required for association of the 30S and 50S subunits to form the 70S ribosome, for tRNA binding and peptide bond formation. It has been suggested to have peptidyltransferase activity; this is somewhat controversial. Makes several contacts with the 16S rRNA in the 70S ribosome. In Nitrosomonas eutropha (strain DSM 101675 / C91 / Nm57), this protein is Large ribosomal subunit protein uL2.